A 70-amino-acid chain; its full sequence is MQGVQEQIEELQTKLAFQELTVEELNQEVIKLNQLIAHQQHQIQLLIGKLQAMEPSNIATQAEETPPPHY.

It belongs to the SlyX family.

The protein is Protein SlyX homolog of Shewanella sp. (strain MR-4).